The chain runs to 332 residues: Arrestin domain-containing protein 5 (332 aa).

The tract at residues 311–332 is disordered; that stretch reads SNQTAAGCRTRAPLPVSPDQQN.

It belongs to the arrestin family.

It localises to the membrane. Functionally, plays an essential role in spermatogenesis. May be involved in the anchoring of the sperm head to the tail during spermatogenesis by affecting SEC22A-mediated SUN5 and NDC1 transport and localization. The polypeptide is Arrestin domain-containing protein 5 (ARRDC5) (Bos taurus (Bovine)).